A 466-amino-acid polypeptide reads, in one-letter code: Probable aminotransferase Rv3329 (466 aa).

Position 294 is an N6-(pyridoxal phosphate)lysine (K294).

The protein belongs to the class-III pyridoxal-phosphate-dependent aminotransferase family. It depends on pyridoxal 5'-phosphate as a cofactor.

In terms of biological role, probable aminotransferase. This Mycobacterium tuberculosis (strain ATCC 25618 / H37Rv) protein is Probable aminotransferase Rv3329.